Here is a 442-residue protein sequence, read N- to C-terminus: Proline--tRNA ligase (442 aa).

Belongs to the class-II aminoacyl-tRNA synthetase family. ProS type 2 subfamily. Homodimer.

It is found in the cytoplasm. It catalyses the reaction tRNA(Pro) + L-proline + ATP = L-prolyl-tRNA(Pro) + AMP + diphosphate. Catalyzes the attachment of proline to tRNA(Pro) in a two-step reaction: proline is first activated by ATP to form Pro-AMP and then transferred to the acceptor end of tRNA(Pro). This chain is Proline--tRNA ligase, found in Brucella ovis (strain ATCC 25840 / 63/290 / NCTC 10512).